Reading from the N-terminus, the 340-residue chain is Fructoselysine 6-phosphate deglycase (340 aa).

2 consecutive SIS domains span residues 35–169 and 201–331; these read IVEE…RLAP and LGEL…PDER.

Homododecamer.

The enzyme catalyses N(6)-(6-phospho-D-fructosyl)-L-lysine + H2O = D-glucose 6-phosphate + L-lysine. Its pathway is carbohydrate metabolism; fructoselysine degradation; D-glucose 6-phosphate and lysine from fructoselysine: step 2/2. Its activity is regulated as follows. Strongly inhibited by ZnCl(2). Functionally, catalyzes the reversible conversion of fructoselysine 6-phosphate to glucose 6-phosphate and lysine. Functions in a fructoselysine degradation pathway that allows E.coli to grow on fructoselysine or psicoselysine. In Escherichia coli (strain K12), this protein is Fructoselysine 6-phosphate deglycase.